A 332-amino-acid polypeptide reads, in one-letter code: Capsular polysaccharide phosphotransferase WcwK (332 aa).

The protein belongs to the stealth family.

This chain is Capsular polysaccharide phosphotransferase WcwK (wcwK), found in Streptococcus pneumoniae.